The primary structure comprises 343 residues: Dihydroorotase (343 aa).

Zn(2+)-binding residues include histidine 13 and histidine 15. Substrate contacts are provided by residues 15-17 (HLR) and asparagine 41. Zn(2+) contacts are provided by lysine 99, histidine 136, and histidine 174. Lysine 99 is subject to N6-carboxylysine. Histidine 136 lines the substrate pocket. A substrate-binding site is contributed by leucine 219. Aspartate 247 is a Zn(2+) binding site. The active site involves aspartate 247. Residues histidine 251 and alanine 263 each contribute to the substrate site.

It belongs to the metallo-dependent hydrolases superfamily. DHOase family. Class II DHOase subfamily. Homodimer. Zn(2+) is required as a cofactor.

It carries out the reaction (S)-dihydroorotate + H2O = N-carbamoyl-L-aspartate + H(+). The protein operates within pyrimidine metabolism; UMP biosynthesis via de novo pathway; (S)-dihydroorotate from bicarbonate: step 3/3. Catalyzes the reversible cyclization of carbamoyl aspartate to dihydroorotate. In Shewanella baltica (strain OS223), this protein is Dihydroorotase.